The following is a 185-amino-acid chain: MIKDIIKNAEEKMQKTVTVLKSELGTMKAGRANPSMLDKIQIDYYGSMCPLSQAANISSPEPRVLMITPWEKQLLKEIEKAILKSDLGLNPSNDGSIIRLVIPELTEETRKDLVKKVKKTGEESKVAIRSIRRDANDKIKALKKDGDLSEDQVKKGEDDVQKKTDAIIKEIDKIIVDKEKEILAI.

It belongs to the RRF family.

It is found in the cytoplasm. Its function is as follows. Responsible for the release of ribosomes from messenger RNA at the termination of protein biosynthesis. May increase the efficiency of translation by recycling ribosomes from one round of translation to another. In Clostridium botulinum (strain Alaska E43 / Type E3), this protein is Ribosome-recycling factor.